Here is a 65-residue protein sequence, read N- to C-terminus: Disintegrin VLO4 (65 aa).

The region spanning 1-65 (MNSGNPCCDP…PDCPRNPWKG (65 aa)) is the Disintegrin domain. Cystine bridges form between Cys7–Cys30, Cys21–Cys27, Cys26–Cys51, and Cys39–Cys58. A Cell attachment site motif is present at residues 43–45 (RGD).

Belongs to the disintegrin family. Dimeric disintegrin subfamily. In terms of assembly, homodimer; disulfide-linked. As to expression, expressed by the venom gland.

Its subcellular location is the secreted. Its function is as follows. Poor inhibitor of platelet aggregation. The disintegrin inhibits the adhesion of cells expressing the RGD-dependent integrin alpha-5/beta-1 (ITGA5/ITGB1) to immobilized fibronectin. Inhibition on alpha-2b/beta-3 (ITGA2B/ITGB3) is low. The sequence is that of Disintegrin VLO4 from Macrovipera lebetina obtusa (Levant blunt-nosed viper).